The primary structure comprises 311 residues: MDLKLKDCEFWYSLHGQVPGLLDWDMRNELFLPCTTDQCSLAEQILAKYRVGVMKPPEMPQKRRPSPDGDGPPCEPNLWMWVDPNILCPLGSQEAPKPSGKEDLTNISPFPQPPQKDEGSNCSEDKVVESLPSSSSEQSPLQKQGIHSPSDFELTEEEAEEPDDNSLQSPEMKCYQSQKLWQINNQEKSWQRPPLNCSHLIALALRNNPHCGLSVQEIYNFTRQHFPFFWTAPDGWKSTIHYNLCFLDSFEKVPDSLKDEDNARPRSCLWKLTKEGHRRFWEETRVLAFAQRERIQECMSQPELLTSLFDL.

Disordered stretches follow at residues 56–76 and 90–171; these read PPEMPQKRRPSPDGDGPPCEP and LGSQ…QSPE. The segment covering 115-128 has biased composition (basic and acidic residues); the sequence is QKDEGSNCSEDKVV. Over residues 129 to 143 the composition is skewed to low complexity; it reads ESLPSSSSEQSPLQK. Residues 153-164 are compositionally biased toward acidic residues; it reads ELTEEEAEEPDD. The segment at residues 192-294 is a DNA-binding region (fork-head); the sequence is RPPLNCSHLI…RVLAFAQRER (103 aa).

As to expression, expressed in breast cancer cell lines and primary cancer.

It localises to the nucleus. The chain is Forkhead box protein R2 (FOXR2) from Homo sapiens (Human).